The chain runs to 255 residues: Probable transcriptional regulatory protein PCC7424_2775 (255 aa).

Belongs to the TACO1 family.

The protein localises to the cytoplasm. This chain is Probable transcriptional regulatory protein PCC7424_2775, found in Gloeothece citriformis (strain PCC 7424) (Cyanothece sp. (strain PCC 7424)).